A 794-amino-acid polypeptide reads, in one-letter code: Potassium transporter 2 (794 aa).

Topologically, residues 1 to 21 (MDLNLGKCCGSRSSKKESWRS) are cytoplasmic. Residues 22-42 (VLLLAYQSLGVVYGDLSISPL) traverse the membrane as a helical segment. The Extracellular portion of the chain corresponds to 43 to 64 (YVFKSTFAEDIQHSETNEEIYG). A helical membrane pass occupies residues 65–85 (VMSFVFWTLTLVPLLKYVFIV). Topologically, residues 86-153 (LRADDNGEGG…EKHKWLHTAL (68 aa)) are cytoplasmic. A helical transmembrane segment spans residues 154 to 174 (LLLVLLGTCMVIGDGLLTPAI). Residues 175–193 (SVFSAVSGLELNMSKEHHQ) lie on the Extracellular side of the membrane. Residues 194–214 (YAVIPITCFILVCLFSLQHFG) traverse the membrane as a helical segment. Residues 215–217 (THR) are Cytoplasmic-facing. The chain crosses the membrane as a helical span at residues 218–238 (VGFVFAPIVLTWLLCISGIGL). At 239–265 (YNIIQWNPHIYKALSPTYMFMFLRKTR) the chain is on the extracellular side. The helical transmembrane segment at 266–286 (VSGWMSLGGILLCITGAEAMF) threads the bilayer. At 287-294 (ADLGHFNY) the chain is on the cytoplasmic side. The chain crosses the membrane as a helical span at residues 295 to 315 (AAIQIAFTFLVYPALILAYMG). At 316 to 339 (QAAYLSRHHHSAHAIGFYVSVPKC) the chain is on the extracellular side. The helical transmembrane segment at 340 to 360 (LHWPVLAVAILASVVGSQAII) threads the bilayer. Over 361–391 (SGTFSIINQSQSLGCFPRVKVIHTSDKMHGQ) the chain is Cytoplasmic. A helical transmembrane segment spans residues 392-412 (IYIPEINWMLMILCIAVTIGF). Residues 413-417 (RDVKH) are Extracellular-facing. Helical transmembrane passes span 418–438 (LGNA…CLTS) and 439–459 (LVIV…LLFF). Over 460 to 476 (GSIELLYFSASLTKFRE) the chain is Extracellular. A helical membrane pass occupies residues 477–497 (GAWLPILLSLIFMIIMFVWHY). Topologically, residues 498 to 794 (TTIKKYEFDL…LLEVGMVYVV (297 aa)) are cytoplasmic.

The protein belongs to the HAK/KUP transporter (TC 2.A.72.3) family. Slightly detected in roots, stems, leaves and flowers of mature plants and in potassium-starved plants.

The protein localises to the cell membrane. Its function is as follows. Low-affinity potassium transporter. Could mediate the potassium-dependent cell expansion in growing tissues. The protein is Potassium transporter 2 (POT2) of Arabidopsis thaliana (Mouse-ear cress).